The following is a 275-amino-acid chain: NH(3)-dependent NAD(+) synthetase (275 aa).

46-53 contributes to the ATP binding site; that stretch reads GISGGQDS. Asp-52 is a Mg(2+) binding site. A deamido-NAD(+)-binding site is contributed by Arg-140. ATP is bound at residue Thr-160. Glu-165 contributes to the Mg(2+) binding site. Deamido-NAD(+) is bound by residues Lys-173 and Asp-180. ATP is bound by residues Lys-189 and Thr-211. A deamido-NAD(+)-binding site is contributed by 260-261; that stretch reads HK.

Belongs to the NAD synthetase family. Homodimer.

The catalysed reaction is deamido-NAD(+) + NH4(+) + ATP = AMP + diphosphate + NAD(+) + H(+). It participates in cofactor biosynthesis; NAD(+) biosynthesis; NAD(+) from deamido-NAD(+) (ammonia route): step 1/1. Catalyzes the ATP-dependent amidation of deamido-NAD to form NAD. Uses ammonia as a nitrogen source. The protein is NH(3)-dependent NAD(+) synthetase of Salmonella heidelberg (strain SL476).